The chain runs to 112 residues: uncharacterized protein (112 aa).

A helical membrane pass occupies residues 62-82 (THSFIFFILFLFIFIFLTFSH).

Its subcellular location is the membrane. This is an uncharacterized protein from Saccharomyces cerevisiae (strain ATCC 204508 / S288c) (Baker's yeast).